The primary structure comprises 388 residues: Protochlorophyllide reductase A, chloroplastic (388 aa).

Residues 1–74 constitute a chloroplast transit peptide; the sequence is MALQLLPSTL…KPSGKKTLRQ (74 aa).

Belongs to the short-chain dehydrogenases/reductases (SDR) family. POR subfamily.

It localises to the plastid. It is found in the chloroplast. The catalysed reaction is chlorophyllide a + NADP(+) = protochlorophyllide a + NADPH + H(+). The protein operates within porphyrin-containing compound metabolism; chlorophyll biosynthesis. Functionally, phototransformation of protochlorophyllide (Pchlide) to chlorophyllide (Chlide). The chain is Protochlorophyllide reductase A, chloroplastic (PORA) from Triticum aestivum (Wheat).